The chain runs to 167 residues: HTH-type transcriptional repressor IacR (167 aa).

The span at 1 to 10 shows a compositional bias: polar residues; that stretch reads MSNAKNTSAA. The segment at 1–25 is disordered; that stretch reads MSNAKNTSAASPARKGHSHHDPASD. In terms of domain architecture, HTH marR-type spans 30–162; sequence EDFPFYWLAR…LNRMLEVVFH (133 aa). The H-T-H motif DNA-binding region spans 76–99; it reads ISEISTHAIAKLSTITKIVYRMKE.

Exposure to indole-3-acetic acid (IAA) probably relieves the repressor activity. In terms of biological role, probably acts as a repressor of iacA expression. This Pseudomonas putida (Arthrobacter siderocapsulatus) protein is HTH-type transcriptional repressor IacR.